Reading from the N-terminus, the 411-residue chain is MAEKTEKPTAKKLRDAAKKGQTFKARDIVALIVIATGALAAPALVDLTRIAAEFVRIASTGAQSNPGAYAFAWAKLFLRIAAPFVLLCAAAGALPSLVQSRFTLAVESIRFDLTALDPVKGMKRLFSWRSAKDAVKALLYVGVFALTVRVFADLYHADVFGLFRARPALLGHMWIVLTVRLVLLFLLCALPVLILDAAVEYFLYHRELKMDKHEVKQEYKESEGNHEIKSKRREIHQELLSEEIKANVEQSDFIVANPTHIAIGVYVNPDIVPIPFVSVRETNARALAVIRHAEACGVPVVRNVALARSIYRNSPRRYSFVSHDDIDGVMRVLIWLGEVEAANRGGPPPETRAPTSAEPQARDGVAPLGDACADNAFPDDAPPGAAAPNAGSPDSPAPDGGAPARTGDQNA.

4 helical membrane passes run 28-48 (IVAL…VDLT), 80-100 (IAAP…LVQS), 137-157 (ALLY…LYHA), and 175-195 (IVLT…VLIL). Positions 341–411 (AANRGGPPPE…APARTGDQNA (71 aa)) are disordered. Positions 370–404 (DACADNAFPDDAPPGAAAPNAGSPDSPAPDGGAPA) are enriched in low complexity.

The protein belongs to the type III secretion exporter family.

It localises to the cell membrane. Part of the bsa type III secretion system, is involved in the intracellular replication of invading bacteria inside the host cell. Probably necessary for the lysis of the vacuole membrane and escape into the host cell cytoplasm. In Burkholderia mallei (strain NCTC 10247), this protein is Secretion apparatus protein BsaZ (bsaZ).